Here is a 538-residue protein sequence, read N- to C-terminus: MVKAKGRAKEFQDPDEPITKDYDPEADVDVSEHGSGSEDSEDENAGTEHYVSVGKSKLRKSEGLSLGPQYRGSRVSRDALEEESASEEDDEEGSGDEEFDDPETADLERDAAEANDSEISSDNALGESDEERFKDYTFRASSKPNKPLSKRAKAADYMSSSDNEGAELGGSDSEDEEMDDGLDALVDGEGDSDDESDENDDEEGSGDDEEDDEDDSESDEEDSKAKAQNAKPMMAALSTQPDVDKGLAIRQQRKAYDGLLNMRIRLQKALIAANTFEALDSNPEPESEPYEAAEEAAIKLLNTISSLKDNFGPSHAGEKRKRELDVSMTTSQIWEQMQAEEERAIKSREDRLEKWSRKVQSVNVTGPKGLEGRNKTLISALRDQLINPDNRLAKRSRVPRSCAPAQAAKGVSEDNNIYDDADFYQVLLKELVDQRTVEGSSGAGAGDAVPTVVLTASKDVKNRKNVDRKASKGRKMRFTVHEKMQNFMAPEDRRAWEQGAIDRFFGTLFGRKMQLNEDESDDDMDVDVEEAGLRLFRN.

The segment at 1–239 (MVKAKGRAKE…AKPMMAALST (239 aa)) is disordered. Positions 7-23 (RAKEFQDPDEPITKDYD) are enriched in basic and acidic residues. Acidic residues-rich tracts occupy residues 80-105 (LEEE…PETA) and 172-222 (DSED…DEED). Residues 290–363 (YEAAEEAAIK…KWSRKVQSVN (74 aa)) are a coiled coil.

Belongs to the AATF family.

Its subcellular location is the nucleus. It is found in the nucleolus. The protein is Protein BFR2 (BFR2) of Gibberella zeae (strain ATCC MYA-4620 / CBS 123657 / FGSC 9075 / NRRL 31084 / PH-1) (Wheat head blight fungus).